A 507-amino-acid chain; its full sequence is ATP synthase subunit alpha, chloroplastic (507 aa).

170–177 (GDRQTGKT) provides a ligand contact to ATP. Threonine 257 carries the phosphothreonine modification.

This sequence belongs to the ATPase alpha/beta chains family. As to quaternary structure, F-type ATPases have 2 components, CF(1) - the catalytic core - and CF(0) - the membrane proton channel. CF(1) has five subunits: alpha(3), beta(3), gamma(1), delta(1), epsilon(1). CF(0) has four main subunits: a, b, b' and c.

It localises to the plastid. The protein localises to the chloroplast thylakoid membrane. It carries out the reaction ATP + H2O + 4 H(+)(in) = ADP + phosphate + 5 H(+)(out). Functionally, produces ATP from ADP in the presence of a proton gradient across the membrane. The alpha chain is a regulatory subunit. The polypeptide is ATP synthase subunit alpha, chloroplastic (Barbarea verna (Land cress)).